A 482-amino-acid polypeptide reads, in one-letter code: UDP-N-acetylmuramate--L-alanine ligase (482 aa).

123 to 129 (GTHGKTT) lines the ATP pocket.

This sequence belongs to the MurCDEF family.

The protein localises to the cytoplasm. The enzyme catalyses UDP-N-acetyl-alpha-D-muramate + L-alanine + ATP = UDP-N-acetyl-alpha-D-muramoyl-L-alanine + ADP + phosphate + H(+). The protein operates within cell wall biogenesis; peptidoglycan biosynthesis. Cell wall formation. The sequence is that of UDP-N-acetylmuramate--L-alanine ligase from Pseudomonas putida (strain ATCC 47054 / DSM 6125 / CFBP 8728 / NCIMB 11950 / KT2440).